A 155-amino-acid polypeptide reads, in one-letter code: DNA gyrase inhibitor (155 aa).

This sequence belongs to the DNA gyrase inhibitor family. In terms of assembly, interacts with DNA gyrase.

The protein localises to the cytoplasm. In terms of biological role, inhibits the supercoiling activity of DNA gyrase. Acts by inhibiting DNA gyrase at an early step, prior to (or at the step of) binding of DNA by the gyrase. It protects cells against toxins that target DNA gyrase, by inhibiting activity of these toxins and reducing the formation of lethal double-strand breaks in the cell. The sequence is that of DNA gyrase inhibitor from Erwinia billingiae (strain Eb661).